The sequence spans 177 residues: Large ribosomal subunit protein bL9 (177 aa).

The tract at residues 151–177 (VEEEPAEEVEAPAETEVAEDAEEATEA) is disordered.

The protein belongs to the bacterial ribosomal protein bL9 family.

Its function is as follows. Binds to the 23S rRNA. This Maridesulfovibrio salexigens (strain ATCC 14822 / DSM 2638 / NCIMB 8403 / VKM B-1763) (Desulfovibrio salexigens) protein is Large ribosomal subunit protein bL9.